Reading from the N-terminus, the 295-residue chain is Putative sugar uptake protein YxfA (295 aa).

A run of 10 helical transmembrane segments spans residues 4–26 (VLLA…KFGG), 33–50 (LGMT…FLFR), 54–72 (LTWQ…WAIG), 85–107 (VSVA…GVFA), 117–135 (FILG…YFSA), 156–178 (ALTY…AVLW), 188–206 (IILP…MGRF), 213–235 (YVYQ…LMAA), 241–263 (AIAF…LFLG), and 270–291 (ELVY…LAIV).

This sequence belongs to the GRP transporter (TC 2.A.7.5) family.

It is found in the cell membrane. The polypeptide is Putative sugar uptake protein YxfA (yxfA) (Lactococcus lactis subsp. lactis (strain IL1403) (Streptococcus lactis)).